Reading from the N-terminus, the 472-residue chain is MAGEDHPWHGSILYNLLMSAKQKHGSREEREVRLGAQCWGCACGTQPVLGGEGLPGGQALSLLYRCCFCGENHPRQGGILYSMLTNARQPSGATEAPRARFRTPCWGCACSNAKPLVGRXGLPAGQVPSLLYRCCFCGKKHPRQGSILYSLLTNAQQTHVSREVPEAHRGGEWWQLSYCTHNVGGPEGLQSTQAMAFLYRSYVCCEEQPQQSSVASDTPVRADQTPAAPQEQPRAPWWDTSSGVQRPIALKDPQVVCEAASAGLLKTLRFVKYLPCFQILPLDQQLVLVRSCWAPLLMLELAQDHLHFEMMEISEPNLMHEMLTTRRQETEGPEPADPQATEQPQTVSAEAGHVLSVAAVQAIKSFFFKCWSLNIDTKEYAYLKGTVLFNPDLPGLQCVKYIESLQWRTQQILTEHIRLMQREYQIRSAELNSALFLLRFINTDVVTELFFRPIIGAVSMDDMMLEMLCAKL.

A run of 3 repeats spans residues 1-67 (MAGE…YRCC), 68-135 (FCGE…YRCC), and 136-202 (FCGK…YRSY). The interval 1–255 (MAGEDHPWHG…RPIALKDPQV (255 aa)) is 4 X 67 AA tandem repeats. 3 consecutive short sequence motifs (LXXLL motif) follow at residues 13-17 (LYNLL), 80-84 (LYSML), and 148-152 (LYSLL). An NR LBD domain is found at 190-471 (QSTQAMAFLY…DMMLEMLCAK (282 aa)). A 4; truncated repeat occupies 203–255 (VCCEEQPQQSSVASDTPVRADQTPAAPQEQPRAPWWDTSSGVQRPIALKDPQV). 2 disordered regions span residues 214-237 (VASD…RAPW) and 326-345 (RRQE…EQPQ). Positions 463 to 468 (MMLEML) match the AF-2 motif motif.

It belongs to the nuclear hormone receptor family. NR0 subfamily. As to quaternary structure, homodimer. Interacts with NR5A1, NR5A2, NR0B2 and with COPS2. Interacts with ESRRB; represses ESRRB activity at the GATA6 promoter.

Its subcellular location is the nucleus. The protein localises to the cytoplasm. Its function is as follows. Nuclear receptor that lacks a DNA-binding domain and acts as a corepressor that inhibits the transcriptional activity of other nuclear receptors through heterodimeric interactions. Component of a cascade required for the development of the hypothalamic-pituitary-adrenal-gonadal axis. May also have a role in the development of the embryo and in the maintenance of embryonic stem cell pluripotency. This Rattus norvegicus (Rat) protein is Nuclear receptor subfamily 0 group B member 1 (Nr0b1).